We begin with the raw amino-acid sequence, 136 residues long: MSLIKEFKAFASRGNVIDMAVGIIIGAAFGKIVSSFVADIIMPPIGIILGGVNFSDLSIVLQAAQGDAPSVVIAYGKFIQTIIDFTIIAFAIFMGVKAINRLKRKEEVAPKAPAAPTKDQELLSEIRDLLKAQQEK.

2 consecutive transmembrane segments (helical) span residues 9–29 (AFAS…GAAF) and 79–99 (IQTI…VKAI).

It belongs to the MscL family. As to quaternary structure, homopentamer.

Its subcellular location is the cell inner membrane. Channel that opens in response to stretch forces in the membrane lipid bilayer. May participate in the regulation of osmotic pressure changes within the cell. In Shewanella baltica (strain OS223), this protein is Large-conductance mechanosensitive channel.